We begin with the raw amino-acid sequence, 532 residues long: Phosphoenolpyruvate carboxykinase (ATP) (532 aa).

The substrate site is built by Arg-58, Tyr-194, and Lys-200. Residues Lys-200, His-220, and Gly-236–Thr-244 each bind ATP. Mn(2+) contacts are provided by Lys-200 and His-220. Asp-257 provides a ligand contact to Mn(2+). Residues Glu-285, Arg-322, Arg-442–Val-443, and Thr-448 contribute to the ATP site. Arg-322 serves as a coordination point for substrate.

This sequence belongs to the phosphoenolpyruvate carboxykinase (ATP) family. Mn(2+) serves as cofactor.

The protein localises to the cytoplasm. The enzyme catalyses oxaloacetate + ATP = phosphoenolpyruvate + ADP + CO2. The protein operates within carbohydrate biosynthesis; gluconeogenesis. In terms of biological role, involved in the gluconeogenesis. Catalyzes the conversion of oxaloacetate (OAA) to phosphoenolpyruvate (PEP) through direct phosphoryl transfer between the nucleoside triphosphate and OAA. This chain is Phosphoenolpyruvate carboxykinase (ATP), found in Rubrobacter xylanophilus (strain DSM 9941 / JCM 11954 / NBRC 16129 / PRD-1).